Reading from the N-terminus, the 397-residue chain is Proteasome-activating nucleotidase (397 aa).

Positions 15 to 58 (DYVTFLKRRIRQLELQVRTLEADKERLERELSRLRMEMSRLRQP) form a coiled coil. ATP contacts are provided by residues 182–187 (GCGKTL) and His-321. The segment at 395–397 (MYG) is docks into pockets in the proteasome alpha-ring to cause gate opening.

The protein belongs to the AAA ATPase family. In terms of assembly, homohexamer. The hexameric complex has a two-ring architecture resembling a top hat that caps the 20S proteasome core at one or both ends. Upon ATP-binding, the C-terminus of PAN interacts with the alpha-rings of the proteasome core by binding to the intersubunit pockets.

It is found in the cytoplasm. ATPase which is responsible for recognizing, binding, unfolding and translocation of substrate proteins into the archaeal 20S proteasome core particle. Is essential for opening the gate of the 20S proteasome via an interaction with its C-terminus, thereby allowing substrate entry and access to the site of proteolysis. Thus, the C-termini of the proteasomal ATPase function like a 'key in a lock' to induce gate opening and therefore regulate proteolysis. Unfolding activity requires energy from ATP hydrolysis, whereas ATP binding alone promotes ATPase-20S proteasome association which triggers gate opening, and supports translocation of unfolded substrates. The protein is Proteasome-activating nucleotidase of Thermococcus kodakarensis (strain ATCC BAA-918 / JCM 12380 / KOD1) (Pyrococcus kodakaraensis (strain KOD1)).